Consider the following 97-residue polypeptide: ESAT-6-like protein EsxG (97 aa).

It belongs to the WXG100 family. CFP-10 subfamily. As to quaternary structure, forms a tight 1:1 complex with EsxH.

It is found in the secreted. This Mycolicibacterium smegmatis (strain ATCC 700084 / mc(2)155) (Mycobacterium smegmatis) protein is ESAT-6-like protein EsxG.